The following is a 135-amino-acid chain: Galectin-1 (135 aa).

Ala2 carries the N-acetylalanine modification. One can recognise a Galectin domain in the interval 4–135 (GLVASNLNLK…DFKIKCVAFE (132 aa)). An N6-acetyllysine mark is found at Lys13 and Lys29. Ser30 carries the post-translational modification Phosphoserine. A beta-D-galactoside contacts are provided by residues 45-49 (HFNPR), His53, Asn62, and 69-72 (WGAE). Position 108 is an N6-acetyllysine; alternate (Lys108). At Lys108 the chain carries N6-succinyllysine; alternate. Lys128 is modified (N6-acetyllysine).

In terms of assembly, homodimer. Binds LGALS3BP. Interacts with CD2, CD3, CD4, CD6, CD7, CD43, ALCAM and CD45. Interacts with laminin (via poly-N-acetyllactosamine). Interacts with SUSD2. Interacts with cargo receptor TMED10; the interaction mediates the translocation from the cytoplasm into the ERGIC (endoplasmic reticulum-Golgi intermediate compartment) and thereby secretion.

The protein localises to the secreted. The protein resides in the extracellular space. It localises to the extracellular matrix. Its subcellular location is the cytoplasm. In terms of biological role, lectin that binds beta-galactoside and a wide array of complex carbohydrates. Plays a role in regulating apoptosis, cell proliferation and cell differentiation. Inhibits CD45 protein phosphatase activity and therefore the dephosphorylation of Lyn kinase. Strong inducer of T-cell apoptosis. This chain is Galectin-1 (LGALS1), found in Ovis aries (Sheep).